Reading from the N-terminus, the 607-residue chain is Hemagglutinin glycoprotein (607 aa).

Residues 1–37 are Intravirion-facing; sequence MLSYQDKVGAFYKDNARANSSRLSLVTEDQGGRRPPY. The chain crosses the membrane as a helical span at residues 38-58; it reads LLFVLLILLVGIMALLAITGV. The Virion surface segment spans residues 59 to 607; it reads RFHQVSTSNM…IRFSCNRSKP (549 aa). N-linked (GlcNAc...) asparagine; by host glycans are attached at residues Asn149, Asn309, Asn391, Asn422, Asn456, Asn587, and Asn603.

It belongs to the paramyxoviruses hemagglutinin-neuraminidase family. Non-sialidase subfamily. Binds canine SLAMF1 at the cell surface.

The protein localises to the virion membrane. It localises to the host cell membrane. In terms of biological role, attaches the virus to cell receptors and thereby initiating infection. Binding of H protein to the receptor induces a conformational change that allows the F protein to trigger virion/cell membranes fusion. The cellular receptor might be SLAM, and may explain the lymphotropism of the virus. This chain is Hemagglutinin glycoprotein (H), found in Canine distemper virus (strain A92-27/4) (CDV).